Reading from the N-terminus, the 519-residue chain is Probable DNA ligase (519 aa).

Residue glutamate 211 participates in ATP binding. Lysine 213 functions as the N6-AMP-lysine intermediate in the catalytic mechanism. Residues arginine 218, arginine 233, glutamate 262, phenylalanine 302, arginine 374, and lysine 380 each coordinate ATP.

It belongs to the ATP-dependent DNA ligase family. It depends on Mg(2+) as a cofactor.

The catalysed reaction is ATP + (deoxyribonucleotide)n-3'-hydroxyl + 5'-phospho-(deoxyribonucleotide)m = (deoxyribonucleotide)n+m + AMP + diphosphate.. In terms of biological role, DNA ligase that seals nicks in double-stranded DNA during DNA replication, DNA recombination and DNA repair. This chain is Probable DNA ligase, found in Anaeromyxobacter sp. (strain Fw109-5).